A 329-amino-acid chain; its full sequence is Transmembrane protein I329L (329 aa).

Residues 1-31 (MLRVFIFFVFLGSGLAGRIKPQITCKYFISE) form the signal peptide. N-linked (GlcNAc...) asparagine; by host glycosylation is found at N32, N39, N44, N76, N82, and N101. Over 32–239 (NNTWYKYNVT…NTERYKNCYP (208 aa)) the chain is Extracellular. The stretch at 112 to 133 (ELKFLDLRYNNLQFIDYNILRK) is one LRR repeat. N-linked (GlcNAc...) asparagine; by host glycosylation is found at N185 and N219. Cysteines 195 and 237 form a disulfide. The chain crosses the membrane as a helical span at residues 240 to 260 (FVLVSILCSCISFLFLIICLL). Residues 261 to 329 (RSICKKYSCT…EKKASCSRRK (69 aa)) lie on the Cytoplasmic side of the membrane.

It belongs to the asfivirus I329L family. Highly glycosylated.

Its subcellular location is the host endoplasmic reticulum membrane. It localises to the host Golgi apparatus membrane. Its function is as follows. Viral TLR3 homolog that probably prevents TLR3 dimerization and subsequent induction of IFN. Inhibits dsRNA-stimulated activation of NF-kB and IRF3. This is Transmembrane protein I329L from Ornithodoros (relapsing fever ticks).